The primary structure comprises 616 residues: Angiotensin-converting enzyme (616 aa).

Residues 1 to 23 form the signal peptide; it reads MNLINFSYLNLLFGAGLFSVLES. The Peptidase M2 domain occupies 27–610; that stretch reads LNTESDAKKW…PRAENWMGGK (584 aa). 2 N-linked (GlcNAc...) asparagine glycosylation sites follow: asparagine 61 and asparagine 96. The cysteines at positions 142 and 152 are disulfide-linked. 2 residues coordinate chloride: arginine 180 and tyrosine 218. The N-linked (GlcNAc...) asparagine glycan is linked to asparagine 303. A disulfide bridge connects residues cysteine 345 and cysteine 363. Residue histidine 376 coordinates Zn(2+). Glutamate 377 acts as the Proton acceptor in catalysis. The Zn(2+) site is built by histidine 380 and glutamate 404. N-linked (GlcNAc...) asparagine glycosylation is present at asparagine 428. Positions 478 and 482 each coordinate chloride. The active-site Proton donor is the histidine 506. Arginine 515 lines the chloride pocket. Cysteine 531 and cysteine 543 are joined by a disulfide. Asparagine 535 and asparagine 573 each carry an N-linked (GlcNAc...) asparagine glycan.

Belongs to the peptidase M2 family. The cofactor is Zn(2+). Chloride serves as cofactor. In terms of tissue distribution, epithelial cells of the midgut.

It is found in the secreted. It localises to the extracellular space. It carries out the reaction Release of a C-terminal dipeptide, oligopeptide-|-Xaa-Yaa, when Xaa is not Pro, and Yaa is neither Asp nor Glu. Thus, conversion of angiotensin I to angiotensin II, with increase in vasoconstrictor activity, but no action on angiotensin II.. With respect to regulation, activated by chloride. Inhibited by captopril and lisinopril, and to a lesser extent by delaprilat. This Theromyzon tessulatum (Duck leech) protein is Angiotensin-converting enzyme (ACE).